The primary structure comprises 661 residues: Immunoglobulin-like domain-containing receptor 2 (661 aa).

Residues 1–35 (MPAFPTLDLDGKLGKMDRVVLGWTAVFWLTAMVEG) form the signal peptide. The region spanning 36 to 177 (LQVTVPDKKK…LEGKNEDSVE (142 aa)) is the Ig-like V-type domain. Topologically, residues 36–201 (LQVTVPDKKK…PSFAVEIMPE (166 aa)) are lumenal. A disulfide bond links cysteine 57 and cysteine 160. A helical membrane pass occupies residues 202–222 (WVFVGLVILGIFLFFVLVGIC). The Cytoplasmic segment spans residues 223-661 (WCQCCPHSCC…DFPTRMSLVV (439 aa)). 3 disordered regions span residues 288–310 (LMDK…HSVR), 410–429 (EDRE…MLSR), and 453–661 (QRSR…SLVV). Basic and acidic residues-rich tracts occupy residues 410–428 (EDRE…EMLS) and 463–478 (HEAR…ESRA). A Phosphoserine modification is found at serine 487. Basic and acidic residues predominate over residues 491 to 506 (YYGRGRSREPPGDGER). Arginine 559 carries the post-translational modification Omega-N-methylarginine. Position 594 is a phosphoserine (serine 594). The span at 595–607 (EGEDEDDAADEDA) shows a compositional bias: acidic residues. Residues 628–639 (RGRDLSFHSNSE) show a composition bias toward basic and acidic residues.

It belongs to the immunoglobulin superfamily. LISCH7 family. As to quaternary structure, interacts with MARVELD2 and OCLN. Interacts with P4HB and HSPA5; the interaction with HSPA5 stabilizes ILDR2 expression. Interacts (via C-terminus) with TRA2A, TRA2B and SRSF1. In terms of tissue distribution, expressed in epithelial tissues, mainly in liver, kidney and colon.

Its subcellular location is the endoplasmic reticulum membrane. The protein localises to the cell junction. It is found in the tight junction. The protein resides in the nucleus. Its function is as follows. May be involved in ER stress pathways with effects on lipid homeostasis and insulin secretion. With ILDR1 and LSR, involved in the maintain of the epithelial barrier function through the recruitment of MARVELD2/tricellulin to tricellular tight junctions. Also functions as a B7-like protein family member expressed on immune cells and inflamed tissue and with T-cell inhibitory activity. In the inner ear, may regulate alternative pre-mRNA splicing via binding to TRA2A, TRA2B and SRSF1. In Mus musculus (Mouse), this protein is Immunoglobulin-like domain-containing receptor 2.